The following is a 104-amino-acid chain: MNIMKMMKQVQQMQAGLAAAQEKLASQTVTTEGAGGKLKVTATCDGNLTELVIDPSIIDPSDSEFLQELLLQTINAAIAKGKETAAAEMKKLTGGLDLPPGMGF.

Belongs to the YbaB/EbfC family. Homodimer.

It is found in the cytoplasm. Its subcellular location is the nucleoid. Functionally, binds to DNA and alters its conformation. May be involved in regulation of gene expression, nucleoid organization and DNA protection. The polypeptide is Nucleoid-associated protein Amuc_1227 (Akkermansia muciniphila (strain ATCC BAA-835 / DSM 22959 / JCM 33894 / BCRC 81048 / CCUG 64013 / CIP 107961 / Muc)).